The sequence spans 526 residues: Na(+)/H(+) antiporter NhaB (526 aa).

The next 10 helical transmembrane spans lie at 13–33, 98–118, 133–155, 208–228, 244–264, 309–329, 355–375, 395–415, 452–472, and 481–501; these read FLGQ…VVNP, LLLI…LFVF, LAFC…VAVV, LLMH…VGEP, FFLR…LVCL, ALIG…VGLI, EALP…VIIE, LALF…VFVG, VATP…LAPL, and VWMA…CVQF.

The protein belongs to the NhaB Na(+)/H(+) (TC 2.A.34) antiporter family.

The protein resides in the cell inner membrane. It catalyses the reaction 2 Na(+)(in) + 3 H(+)(out) = 2 Na(+)(out) + 3 H(+)(in). Na(+)/H(+) antiporter that extrudes sodium in exchange for external protons. In Serratia proteamaculans (strain 568), this protein is Na(+)/H(+) antiporter NhaB.